A 202-amino-acid polypeptide reads, in one-letter code: Guanylyl cyclase-activating protein 1 (202 aa).

The N-myristoyl glycine moiety is linked to residue G2. Position 3 is a deamidated asparagine (N3). EF-hand domains are found at residues 31 to 49 (SGQL…KNLS), 51 to 86 (SASQ…VLKG), 87 to 122 (KVEQ…IRTI), and 131 to 166 (SAEE…DQML). Residues D64, N66, D68, Y70, E75, D100, D102, N104, C106, E111, D144, N146, D148, E150, and E155 each coordinate Ca(2+).

As to quaternary structure, homodimer. As to expression, in the retina, expressed in rod photoreceptors (at protein level). Expressed in cone photoreceptors.

It localises to the membrane. The protein resides in the photoreceptor inner segment. The protein localises to the cell projection. It is found in the cilium. Its subcellular location is the photoreceptor outer segment. Functionally, stimulates retinal guanylyl cyclase when free calcium ions concentration is low and inhibits guanylyl cyclase when free calcium ions concentration is elevated. This Ca(2+)-sensitive regulation of retinal guanylyl cyclase is a key event in recovery of the dark state of rod photoreceptors following light exposure. May be involved in cone photoreceptor light response and recovery of response in bright light. The chain is Guanylyl cyclase-activating protein 1 (Guca1a) from Mus musculus (Mouse).